The sequence spans 241 residues: Adenosylcobinamide-GDP ribazoletransferase (241 aa).

Transmembrane regions (helical) follow at residues 34–54 (LGLP…AWAF), 108–128 (VGGL…FGWI), 184–206 (LPFS…WTCL), and 220–240 (FLGA…SSLP).

It belongs to the CobS family. Requires Mg(2+) as cofactor.

It localises to the cell membrane. It catalyses the reaction alpha-ribazole + adenosylcob(III)inamide-GDP = adenosylcob(III)alamin + GMP + H(+). The catalysed reaction is alpha-ribazole 5'-phosphate + adenosylcob(III)inamide-GDP = adenosylcob(III)alamin 5'-phosphate + GMP + H(+). The protein operates within cofactor biosynthesis; adenosylcobalamin biosynthesis; adenosylcobalamin from cob(II)yrinate a,c-diamide: step 7/7. In terms of biological role, joins adenosylcobinamide-GDP and alpha-ribazole to generate adenosylcobalamin (Ado-cobalamin). Also synthesizes adenosylcobalamin 5'-phosphate from adenosylcobinamide-GDP and alpha-ribazole 5'-phosphate. The sequence is that of Adenosylcobinamide-GDP ribazoletransferase from Methanopyrus kandleri (strain AV19 / DSM 6324 / JCM 9639 / NBRC 100938).